The chain runs to 113 residues: MSDILVPLIFTDAAAKKVKFLIEGEENPELRLRVYITGGGCSGFQYGFTFDDKLNEGDLTIENLDVALVIDPMSLQYLIGATIDYVEGLDGSRFVVQNPNASSTCGCGASFSI.

Positions 41, 105, and 107 each coordinate iron-sulfur cluster.

It belongs to the HesB/IscA family. As to quaternary structure, homodimer. It depends on iron-sulfur cluster as a cofactor.

In terms of biological role, required for insertion of 4Fe-4S clusters for at least IspG. This Glaesserella parasuis serovar 5 (strain SH0165) (Haemophilus parasuis) protein is Iron-sulfur cluster insertion protein ErpA.